The chain runs to 208 residues: Protein-L-isoaspartate O-methyltransferase (208 aa).

The active site involves S59.

The protein belongs to the methyltransferase superfamily. L-isoaspartyl/D-aspartyl protein methyltransferase family.

It is found in the cytoplasm. It catalyses the reaction [protein]-L-isoaspartate + S-adenosyl-L-methionine = [protein]-L-isoaspartate alpha-methyl ester + S-adenosyl-L-homocysteine. Functionally, catalyzes the methyl esterification of L-isoaspartyl residues in peptides and proteins that result from spontaneous decomposition of normal L-aspartyl and L-asparaginyl residues. It plays a role in the repair and/or degradation of damaged proteins. This is Protein-L-isoaspartate O-methyltransferase from Salmonella newport (strain SL254).